A 337-amino-acid polypeptide reads, in one-letter code: Holliday junction branch migration complex subunit RuvB (337 aa).

The tract at residues 1–181 (MQRLVEIERF…FGMNFRMQFY (181 aa)) is large ATPase domain (RuvB-L). Residues leucine 20, arginine 21, glycine 62, lysine 65, threonine 66, threonine 67, 128–130 (EDF), arginine 171, tyrosine 181, and arginine 218 each bind ATP. Position 66 (threonine 66) interacts with Mg(2+). The small ATPAse domain (RuvB-S) stretch occupies residues 182-252 (SPEELSKIIS…RAQYALDELG (71 aa)). Residues 255-337 (SYGFDEMDIK…MPALDDGGLF (83 aa)) form a head domain (RuvB-H) region. Positions 309 and 314 each coordinate DNA.

The protein belongs to the RuvB family. Homohexamer. Forms an RuvA(8)-RuvB(12)-Holliday junction (HJ) complex. HJ DNA is sandwiched between 2 RuvA tetramers; dsDNA enters through RuvA and exits via RuvB. An RuvB hexamer assembles on each DNA strand where it exits the tetramer. Each RuvB hexamer is contacted by two RuvA subunits (via domain III) on 2 adjacent RuvB subunits; this complex drives branch migration. In the full resolvosome a probable DNA-RuvA(4)-RuvB(12)-RuvC(2) complex forms which resolves the HJ.

It localises to the cytoplasm. The catalysed reaction is ATP + H2O = ADP + phosphate + H(+). The RuvA-RuvB-RuvC complex processes Holliday junction (HJ) DNA during genetic recombination and DNA repair, while the RuvA-RuvB complex plays an important role in the rescue of blocked DNA replication forks via replication fork reversal (RFR). RuvA specifically binds to HJ cruciform DNA, conferring on it an open structure. The RuvB hexamer acts as an ATP-dependent pump, pulling dsDNA into and through the RuvAB complex. RuvB forms 2 homohexamers on either side of HJ DNA bound by 1 or 2 RuvA tetramers; 4 subunits per hexamer contact DNA at a time. Coordinated motions by a converter formed by DNA-disengaged RuvB subunits stimulates ATP hydrolysis and nucleotide exchange. Immobilization of the converter enables RuvB to convert the ATP-contained energy into a lever motion, pulling 2 nucleotides of DNA out of the RuvA tetramer per ATP hydrolyzed, thus driving DNA branch migration. The RuvB motors rotate together with the DNA substrate, which together with the progressing nucleotide cycle form the mechanistic basis for DNA recombination by continuous HJ branch migration. Branch migration allows RuvC to scan DNA until it finds its consensus sequence, where it cleaves and resolves cruciform DNA. This is Holliday junction branch migration complex subunit RuvB from Sulfurimonas denitrificans (strain ATCC 33889 / DSM 1251) (Thiomicrospira denitrificans (strain ATCC 33889 / DSM 1251)).